We begin with the raw amino-acid sequence, 376 residues long: Histidinol dehydrogenase (376 aa).

Positions 100 and 182 each coordinate NAD(+). Residues S205, Q227, and H230 each coordinate substrate. Positions 227 and 230 each coordinate Zn(2+). Active-site proton acceptor residues include E275 and H276. Residues H276, D309, E363, and H368 each coordinate substrate. Position 309 (D309) interacts with Zn(2+). H368 lines the Zn(2+) pocket.

Belongs to the histidinol dehydrogenase family. Zn(2+) is required as a cofactor.

It carries out the reaction L-histidinol + 2 NAD(+) + H2O = L-histidine + 2 NADH + 3 H(+). It functions in the pathway amino-acid biosynthesis; L-histidine biosynthesis; L-histidine from 5-phospho-alpha-D-ribose 1-diphosphate: step 9/9. Functionally, catalyzes the sequential NAD-dependent oxidations of L-histidinol to L-histidinaldehyde and then to L-histidine. The chain is Histidinol dehydrogenase from Thermococcus kodakarensis (strain ATCC BAA-918 / JCM 12380 / KOD1) (Pyrococcus kodakaraensis (strain KOD1)).